Reading from the N-terminus, the 294-residue chain is UDP-3-O-acyl-N-acetylglucosamine deacetylase (294 aa).

Zn(2+)-binding residues include H75, H232, and D236. H259 acts as the Proton donor in catalysis.

This sequence belongs to the LpxC family. It depends on Zn(2+) as a cofactor.

The enzyme catalyses a UDP-3-O-[(3R)-3-hydroxyacyl]-N-acetyl-alpha-D-glucosamine + H2O = a UDP-3-O-[(3R)-3-hydroxyacyl]-alpha-D-glucosamine + acetate. It functions in the pathway glycolipid biosynthesis; lipid IV(A) biosynthesis; lipid IV(A) from (3R)-3-hydroxytetradecanoyl-[acyl-carrier-protein] and UDP-N-acetyl-alpha-D-glucosamine: step 2/6. Catalyzes the hydrolysis of UDP-3-O-myristoyl-N-acetylglucosamine to form UDP-3-O-myristoylglucosamine and acetate, the committed step in lipid A biosynthesis. The sequence is that of UDP-3-O-acyl-N-acetylglucosamine deacetylase from Campylobacter jejuni subsp. jejuni serotype O:23/36 (strain 81-176).